The following is a 373-amino-acid chain: Flagellar P-ring protein (373 aa).

An N-terminal signal peptide occupies residues 1-26; sequence MKLFFRIVTLVAVVAMSLADMAPAWA.

It belongs to the FlgI family. The basal body constitutes a major portion of the flagellar organelle and consists of four rings (L,P,S, and M) mounted on a central rod.

The protein resides in the periplasm. It is found in the bacterial flagellum basal body. Its function is as follows. Assembles around the rod to form the L-ring and probably protects the motor/basal body from shearing forces during rotation. This is Flagellar P-ring protein from Rhizobium etli (strain ATCC 51251 / DSM 11541 / JCM 21823 / NBRC 15573 / CFN 42).